Here is a 760-residue protein sequence, read N- to C-terminus: Ring-infected erythrocyte surface antigen (760 aa).

A disordered region spans residues 214–300 (DTSQEESVEE…SDVQQTSEAA (87 aa)). Acidic residues predominate over residues 216–230 (SQEESVEENEEEHTV). Residues 231 to 242 (DDEHVEEHTADD) are compositionally biased toward basic and acidic residues. Residues 243–256 (EHVEEPTVADDEHV) show a composition bias toward acidic residues. Positions 262–288 (ADEHVEEPTVAEEHVEEPTVAEEHVEE) are enriched in basic and acidic residues. In terms of domain architecture, J spans 307–375 (DTLYYDILGV…KRWYNKYGYD (69 aa)). Residues Asn425, Asn559, and Asn563 are each glycosylated (N-linked (GlcNAc...) asparagine). Basic and acidic residues predominate over residues 683–692 (EHDAEENVEH). Residues 683–738 (EHDAEENVEHDAEENAEENVEENVEEVEENVEENVEENVGEKKMRREEKKKRVQEP) form a disordered region. The segment covering 693–720 (DAEENAEENVEENVEEVEENVEENVEEN) has biased composition (acidic residues).

Its subcellular location is the cell membrane. Its function is as follows. May disrupt the normal intermolecular interactions of the cytoplasmic domain of band 3 and thereby facilitate the invagination of the red cell membrane which is necessary for the formation of the parasitophorous vacuole. The protein is Ring-infected erythrocyte surface antigen (RESA) of Plasmodium falciparum (isolate NF7 / Ghana).